Reading from the N-terminus, the 261-residue chain is Cytochrome c oxidase subunit 3 (261 aa).

Topologically, residues 1–15 (MTHQTHAYHMVNPSP) are mitochondrial matrix. The helical transmembrane segment at 16–34 (WPLTGALSALLMTSGLIMW) threads the bilayer. Residues 35-40 (FHFNST) are Mitochondrial intermembrane-facing. The helical transmembrane segment at 41 to 66 (TLLMLGLTTNMLTMYQWWRDIIREST) threads the bilayer. At 67–72 (FQGHHT) the chain is on the mitochondrial matrix side. A helical transmembrane segment spans residues 73–105 (PSVQKGLRYGMILFIISEVLFFTGFFWAFYHSS). Residues 106 to 128 (LAPTPELGGCWPPTGIHPLNPLE) are Mitochondrial intermembrane-facing. Residues 129-152 (VPLLNTSVLLASGVSITWAHHSLM) form a helical membrane-spanning segment. Residues 153–155 (EGN) lie on the Mitochondrial matrix side of the membrane. Residues 156-183 (RNHMLQALFITIALGVYFTLLQASEYYE) traverse the membrane as a helical segment. At 184–190 (APFTISD) the chain is on the mitochondrial intermembrane side. A helical membrane pass occupies residues 191–223 (GVYGSTFFVATGFHGLHVIIGSTFLIVCFFRQL). At 224–232 (KFHFTSNHH) the chain is on the mitochondrial matrix side. A helical membrane pass occupies residues 233-256 (FGFEAAAWYWHFVDVVWLFLYVSI). The Mitochondrial intermembrane segment spans residues 257-261 (YWWGS).

Belongs to the cytochrome c oxidase subunit 3 family. As to quaternary structure, component of the cytochrome c oxidase (complex IV, CIV), a multisubunit enzyme composed of 14 subunits. The complex is composed of a catalytic core of 3 subunits MT-CO1, MT-CO2 and MT-CO3, encoded in the mitochondrial DNA, and 11 supernumerary subunits COX4I, COX5A, COX5B, COX6A, COX6B, COX6C, COX7A, COX7B, COX7C, COX8 and NDUFA4, which are encoded in the nuclear genome. The complex exists as a monomer or a dimer and forms supercomplexes (SCs) in the inner mitochondrial membrane with NADH-ubiquinone oxidoreductase (complex I, CI) and ubiquinol-cytochrome c oxidoreductase (cytochrome b-c1 complex, complex III, CIII), resulting in different assemblies (supercomplex SCI(1)III(2)IV(1) and megacomplex MCI(2)III(2)IV(2)).

Its subcellular location is the mitochondrion inner membrane. The catalysed reaction is 4 Fe(II)-[cytochrome c] + O2 + 8 H(+)(in) = 4 Fe(III)-[cytochrome c] + 2 H2O + 4 H(+)(out). In terms of biological role, component of the cytochrome c oxidase, the last enzyme in the mitochondrial electron transport chain which drives oxidative phosphorylation. The respiratory chain contains 3 multisubunit complexes succinate dehydrogenase (complex II, CII), ubiquinol-cytochrome c oxidoreductase (cytochrome b-c1 complex, complex III, CIII) and cytochrome c oxidase (complex IV, CIV), that cooperate to transfer electrons derived from NADH and succinate to molecular oxygen, creating an electrochemical gradient over the inner membrane that drives transmembrane transport and the ATP synthase. Cytochrome c oxidase is the component of the respiratory chain that catalyzes the reduction of oxygen to water. Electrons originating from reduced cytochrome c in the intermembrane space (IMS) are transferred via the dinuclear copper A center (CU(A)) of subunit 2 and heme A of subunit 1 to the active site in subunit 1, a binuclear center (BNC) formed by heme A3 and copper B (CU(B)). The BNC reduces molecular oxygen to 2 water molecules using 4 electrons from cytochrome c in the IMS and 4 protons from the mitochondrial matrix. In Pelea capreolus (Gray rhebok), this protein is Cytochrome c oxidase subunit 3 (MT-CO3).